A 56-amino-acid chain; its full sequence is Large ribosomal subunit protein bL33 (56 aa).

Belongs to the bacterial ribosomal protein bL33 family.

This chain is Large ribosomal subunit protein bL33, found in Delftia acidovorans (strain DSM 14801 / SPH-1).